A 60-amino-acid chain; its full sequence is Large ribosomal subunit protein bL32 (60 aa).

A disordered region spans residues 1-21; that stretch reads MAVPARHTSKAKKNKRRTHYK. The segment covering 7-20 has biased composition (basic residues); it reads HTSKAKKNKRRTHY.

It belongs to the bacterial ribosomal protein bL32 family.

This is Large ribosomal subunit protein bL32 from Streptococcus thermophilus (strain ATCC BAA-250 / LMG 18311).